Reading from the N-terminus, the 92-residue chain is Small ribosomal subunit protein uS19 (92 aa).

The protein belongs to the universal ribosomal protein uS19 family.

In terms of biological role, protein S19 forms a complex with S13 that binds strongly to the 16S ribosomal RNA. This chain is Small ribosomal subunit protein uS19, found in Bartonella quintana (strain Toulouse) (Rochalimaea quintana).